We begin with the raw amino-acid sequence, 218 residues long: Ribose-5-phosphate isomerase A (218 aa).

Substrate contacts are provided by residues 28 to 31, 81 to 84, and 94 to 97; these read TGST, DGAD, and KGGG. Catalysis depends on Glu-103, which acts as the Proton acceptor. Lys-121 is a substrate binding site.

Belongs to the ribose 5-phosphate isomerase family. In terms of assembly, homodimer.

It catalyses the reaction aldehydo-D-ribose 5-phosphate = D-ribulose 5-phosphate. Its pathway is carbohydrate degradation; pentose phosphate pathway; D-ribose 5-phosphate from D-ribulose 5-phosphate (non-oxidative stage): step 1/1. In terms of biological role, catalyzes the reversible conversion of ribose-5-phosphate to ribulose 5-phosphate. The polypeptide is Ribose-5-phosphate isomerase A (Vibrio vulnificus (strain CMCP6)).